The sequence spans 321 residues: Protease HtpX homolog (321 aa).

A run of 2 helical transmembrane segments spans residues 6–26 (TAML…LIGG) and 28–48 (GGMM…YWNS). H130 is a Zn(2+) binding site. E131 is an active-site residue. Residue H134 participates in Zn(2+) binding. The next 2 helical transmembrane spans lie at 145–165 (ITAT…FFGG) and 173–193 (PLGF…AMLV). E202 is a Zn(2+) binding site. Residues 281-321 (EFSPRASTPPPSGDRPVRKSGSVPTTGWRRGNENERKGPWS) are disordered. Over residues 310–321 (RGNENERKGPWS) the composition is skewed to basic and acidic residues.

The protein belongs to the peptidase M48B family. Zn(2+) is required as a cofactor.

Its subcellular location is the cell inner membrane. The sequence is that of Protease HtpX homolog from Agrobacterium fabrum (strain C58 / ATCC 33970) (Agrobacterium tumefaciens (strain C58)).